The primary structure comprises 129 residues: Small ribosomal subunit protein uS11 (129 aa).

This sequence belongs to the universal ribosomal protein uS11 family. In terms of assembly, part of the 30S ribosomal subunit. Interacts with proteins S7 and S18. Binds to IF-3.

Its function is as follows. Located on the platform of the 30S subunit, it bridges several disparate RNA helices of the 16S rRNA. Forms part of the Shine-Dalgarno cleft in the 70S ribosome. The protein is Small ribosomal subunit protein uS11 of Yersinia pseudotuberculosis serotype O:1b (strain IP 31758).